The chain runs to 284 residues: 2-dehydro-3-deoxyphosphooctonate aldolase (284 aa).

The protein belongs to the KdsA family.

It is found in the cytoplasm. It catalyses the reaction D-arabinose 5-phosphate + phosphoenolpyruvate + H2O = 3-deoxy-alpha-D-manno-2-octulosonate-8-phosphate + phosphate. The protein operates within carbohydrate biosynthesis; 3-deoxy-D-manno-octulosonate biosynthesis; 3-deoxy-D-manno-octulosonate from D-ribulose 5-phosphate: step 2/3. It functions in the pathway bacterial outer membrane biogenesis; lipopolysaccharide biosynthesis. This is 2-dehydro-3-deoxyphosphooctonate aldolase from Burkholderia cenocepacia (strain HI2424).